We begin with the raw amino-acid sequence, 354 residues long: Uroporphyrinogen decarboxylase (354 aa).

Residues Arg27 to Arg31, Asp77, Tyr154, Ser209, and His327 contribute to the substrate site.

The protein belongs to the uroporphyrinogen decarboxylase family. In terms of assembly, homodimer.

The protein resides in the cytoplasm. The catalysed reaction is uroporphyrinogen III + 4 H(+) = coproporphyrinogen III + 4 CO2. It participates in porphyrin-containing compound metabolism; protoporphyrin-IX biosynthesis; coproporphyrinogen-III from 5-aminolevulinate: step 4/4. In terms of biological role, catalyzes the decarboxylation of four acetate groups of uroporphyrinogen-III to yield coproporphyrinogen-III. The polypeptide is Uroporphyrinogen decarboxylase (Pseudoalteromonas translucida (strain TAC 125)).